Here is a 119-residue protein sequence, read N- to C-terminus: Large ribosomal subunit protein uL24 (119 aa).

The protein belongs to the universal ribosomal protein uL24 family. In terms of assembly, part of the 50S ribosomal subunit.

In terms of biological role, one of two assembly initiator proteins, it binds directly to the 5'-end of the 23S rRNA, where it nucleates assembly of the 50S subunit. Functionally, one of the proteins that surrounds the polypeptide exit tunnel on the outside of the subunit. This Leifsonia xyli subsp. xyli (strain CTCB07) protein is Large ribosomal subunit protein uL24.